Here is a 226-residue protein sequence, read N- to C-terminus: PKHD-type hydroxylase PP_0862 (226 aa).

Residues 78-178 (KVFPPLINCY…RYAAFFWTQS (101 aa)) enclose the Fe2OG dioxygenase domain. Fe cation contacts are provided by His-96, Asp-98, and His-159. Residue Arg-169 participates in 2-oxoglutarate binding.

Fe(2+) is required as a cofactor. The cofactor is L-ascorbate.

In Pseudomonas putida (strain ATCC 47054 / DSM 6125 / CFBP 8728 / NCIMB 11950 / KT2440), this protein is PKHD-type hydroxylase PP_0862.